The following is a 716-amino-acid chain: 1,4-alpha-glucan branching enzyme GlgB (716 aa).

Asp398 functions as the Nucleophile in the catalytic mechanism. The active-site Proton donor is Glu451.

The protein belongs to the glycosyl hydrolase 13 family. GlgB subfamily. Monomer.

The catalysed reaction is Transfers a segment of a (1-&gt;4)-alpha-D-glucan chain to a primary hydroxy group in a similar glucan chain.. Its pathway is glycan biosynthesis; glycogen biosynthesis. Catalyzes the formation of the alpha-1,6-glucosidic linkages in glycogen by scission of a 1,4-alpha-linked oligosaccharide from growing alpha-1,4-glucan chains and the subsequent attachment of the oligosaccharide to the alpha-1,6 position. This chain is 1,4-alpha-glucan branching enzyme GlgB, found in Nitrobacter winogradskyi (strain ATCC 25391 / DSM 10237 / CIP 104748 / NCIMB 11846 / Nb-255).